The primary structure comprises 472 residues: uncharacterized protein (472 aa).

Belongs to the AllG family.

This is an uncharacterized protein from Escherichia coli (strain K12).